Reading from the N-terminus, the 399-residue chain is S-adenosylmethionine synthase (399 aa).

Residue His-16 participates in ATP binding. Residue Asp-18 participates in Mg(2+) binding. K(+) is bound at residue Glu-44. L-methionine contacts are provided by Glu-57 and Gln-100. The tract at residues 100–110 is flexible loop; sequence QSPDIAQGVDT. ATP contacts are provided by residues 175-177, 246-247, Asp-255, 261-262, Ala-278, and Lys-282; these read DGK, KF, and RK. Asp-255 provides a ligand contact to L-methionine. Residue Lys-286 participates in L-methionine binding. An Isoglutamyl lysine isopeptide (Lys-Gln) (interchain with Q-Cter in protein Pup) cross-link involves residue Lys-341.

It belongs to the AdoMet synthase family. Homotetramer; dimer of dimers. Requires Mg(2+) as cofactor. K(+) is required as a cofactor.

It localises to the cytoplasm. The enzyme catalyses L-methionine + ATP + H2O = S-adenosyl-L-methionine + phosphate + diphosphate. Its pathway is amino-acid biosynthesis; S-adenosyl-L-methionine biosynthesis; S-adenosyl-L-methionine from L-methionine: step 1/1. Catalyzes the formation of S-adenosylmethionine (AdoMet) from methionine and ATP. The overall synthetic reaction is composed of two sequential steps, AdoMet formation and the subsequent tripolyphosphate hydrolysis which occurs prior to release of AdoMet from the enzyme. This Mycolicibacterium smegmatis (strain ATCC 700084 / mc(2)155) (Mycobacterium smegmatis) protein is S-adenosylmethionine synthase.